Reading from the N-terminus, the 105-residue chain is Replication restart protein PriB (105 aa).

Residues 1 to 102 form the SSB domain; that stretch reads MTANRLVLTG…LHAEQIELID (102 aa).

The protein belongs to the PriB family. In terms of assembly, homodimer. Interacts with PriA and DnaT. Component of the replication restart primosome. Primosome assembly occurs via a 'hand-off' mechanism. PriA binds to replication forks, subsequently PriB then DnaT bind; DnaT then displaces ssDNA to generate the helicase loading substrate.

Functionally, involved in the restart of stalled replication forks, which reloads the replicative helicase on sites other than the origin of replication; the PriA-PriB pathway is the major replication restart pathway. During primosome assembly it facilitates complex formation between PriA and DnaT on DNA; stabilizes PriA on DNA. Stimulates the DNA unwinding activity of PriA helicase. The protein is Replication restart protein PriB of Proteus mirabilis (strain HI4320).